The primary structure comprises 416 residues: Putative L-glutamine:3-amino-2,3-dideoxy-scyllo-inosose aminotransferase (416 aa).

K199 carries the N6-(pyridoxal phosphate)lysine modification.

The protein belongs to the DegT/DnrJ/EryC1 family. L-glutamine:2-deoxy-scyllo-inosose/scyllo-inosose aminotransferase subfamily. It depends on pyridoxal 5'-phosphate as a cofactor.

It catalyses the reaction 3-amino-2,3-dideoxy-scyllo-inosose + L-glutamine = 2-deoxystreptamine + 2-oxoglutaramate. It participates in metabolic intermediate biosynthesis; 2-deoxystreptamine biosynthesis; 2-deoxystreptamine from D-glucose 6-phosphate: step 4/4. The protein operates within antibiotic biosynthesis; tobramycin biosynthesis. Its function is as follows. Catalyzes the transamination of 3-amino-2,3-dideoxy-scyllo-inosose (amino-DOI) into 2-deoxystreptamine (DOS). This Streptoalloteichus tenebrarius (strain ATCC 17920 / DSM 40477 / JCM 4838 / CBS 697.72 / NBRC 16177 / NCIMB 11028 / NRRL B-12390 / A12253. 1 / ISP 5477) (Streptomyces tenebrarius) protein is Putative L-glutamine:3-amino-2,3-dideoxy-scyllo-inosose aminotransferase (tobS2).